The primary structure comprises 106 residues: Urease subunit beta (106 aa).

This sequence belongs to the urease beta subunit family. As to quaternary structure, heterotrimer of UreA (gamma), UreB (beta) and UreC (alpha) subunits. Three heterotrimers associate to form the active enzyme.

The protein localises to the cytoplasm. It carries out the reaction urea + 2 H2O + H(+) = hydrogencarbonate + 2 NH4(+). Its pathway is nitrogen metabolism; urea degradation; CO(2) and NH(3) from urea (urease route): step 1/1. In Parasynechococcus marenigrum (strain WH8102), this protein is Urease subunit beta.